Consider the following 473-residue polypeptide: Photosystem II CP43 reaction center protein (473 aa).

Residues 1-14 (MKTLYSLRRFSHVE) constitute a propeptide that is removed on maturation. At threonine 15 the chain carries N-acetylthreonine. Position 15 is a phosphothreonine (threonine 15). Helical transmembrane passes span 69 to 93 (LFEV…PHLA), 134 to 155 (LLGP…KDRN), 178 to 200 (KALY…RKIT), 255 to 275 (KPFA…LSYS), and 291 to 312 (WFNN…ASQA). A [CaMn4O5] cluster-binding site is contributed by glutamate 367. A helical transmembrane segment spans residues 447–471 (RARAAAAGFEKGIDRDFEPVLSMTP).

It belongs to the PsbB/PsbC family. PsbC subfamily. In terms of assembly, PSII is composed of 1 copy each of membrane proteins PsbA, PsbB, PsbC, PsbD, PsbE, PsbF, PsbH, PsbI, PsbJ, PsbK, PsbL, PsbM, PsbT, PsbX, PsbY, PsbZ, Psb30/Ycf12, at least 3 peripheral proteins of the oxygen-evolving complex and a large number of cofactors. It forms dimeric complexes. Requires Binds multiple chlorophylls and provides some of the ligands for the Ca-4Mn-5O cluster of the oxygen-evolving complex. It may also provide a ligand for a Cl- that is required for oxygen evolution. PSII binds additional chlorophylls, carotenoids and specific lipids. as cofactor.

It localises to the plastid membrane. In terms of biological role, one of the components of the core complex of photosystem II (PSII). It binds chlorophyll and helps catalyze the primary light-induced photochemical processes of PSII. PSII is a light-driven water:plastoquinone oxidoreductase, using light energy to abstract electrons from H(2)O, generating O(2) and a proton gradient subsequently used for ATP formation. The polypeptide is Photosystem II CP43 reaction center protein (Cuscuta obtusiflora (Peruvian dodder)).